Reading from the N-terminus, the 271-residue chain is MLIDVKPLYSEIKNLIMDRMSKLKKVPKLVAVTYKPDPSTISYLKSQEKAAKRFGLDYEIFEASNSIEVLEKLRKLSEDKSVNGIFVTHPLPELDEMLVFENLSPEKDIEGRHPYNLGMLMYGNEFFAPCTAEAVVKILENVTEITGKNVVIIGRSTTVGKPLATMLLRRDRSATVTVCHTKTRNLPEITRNADIIVAAAGKARLVTKEMVKSDSIVIDVGINVVDGKIVGDVKEDVSEIAKVTPVPGGVGRITTALLMEHVVKSAEKMNF.

NADP(+) contacts are provided by residues 154–156 (GRS), threonine 181, and isoleucine 222.

The protein belongs to the tetrahydrofolate dehydrogenase/cyclohydrolase family. As to quaternary structure, homodimer.

It catalyses the reaction (6R)-5,10-methylene-5,6,7,8-tetrahydrofolate + NADP(+) = (6R)-5,10-methenyltetrahydrofolate + NADPH. It carries out the reaction (6R)-5,10-methenyltetrahydrofolate + H2O = (6R)-10-formyltetrahydrofolate + H(+). Its pathway is one-carbon metabolism; tetrahydrofolate interconversion. Functionally, catalyzes the oxidation of 5,10-methylenetetrahydrofolate to 5,10-methenyltetrahydrofolate and then the hydrolysis of 5,10-methenyltetrahydrofolate to 10-formyltetrahydrofolate. The protein is Bifunctional protein FolD of Thermosipho africanus (strain TCF52B).